The primary structure comprises 477 residues: Aspartyl/glutamyl-tRNA(Asn/Gln) amidotransferase subunit B (477 aa).

This sequence belongs to the GatB/GatE family. GatB subfamily. Heterotrimer of A, B and C subunits.

The catalysed reaction is L-glutamyl-tRNA(Gln) + L-glutamine + ATP + H2O = L-glutaminyl-tRNA(Gln) + L-glutamate + ADP + phosphate + H(+). It carries out the reaction L-aspartyl-tRNA(Asn) + L-glutamine + ATP + H2O = L-asparaginyl-tRNA(Asn) + L-glutamate + ADP + phosphate + 2 H(+). Functionally, allows the formation of correctly charged Asn-tRNA(Asn) or Gln-tRNA(Gln) through the transamidation of misacylated Asp-tRNA(Asn) or Glu-tRNA(Gln) in organisms which lack either or both of asparaginyl-tRNA or glutaminyl-tRNA synthetases. The reaction takes place in the presence of glutamine and ATP through an activated phospho-Asp-tRNA(Asn) or phospho-Glu-tRNA(Gln). This is Aspartyl/glutamyl-tRNA(Asn/Gln) amidotransferase subunit B from Coxiella burnetii (strain CbuK_Q154) (Coxiella burnetii (strain Q154)).